Consider the following 227-residue polypeptide: Ribose-5-phosphate isomerase A (227 aa).

Residues 26 to 29 (TGST), 82 to 85 (DGAD), and 95 to 98 (KGGG) contribute to the substrate site. The Proton acceptor role is filled by Glu104. Lys122 is a binding site for substrate.

This sequence belongs to the ribose 5-phosphate isomerase family. As to quaternary structure, homodimer.

It carries out the reaction aldehydo-D-ribose 5-phosphate = D-ribulose 5-phosphate. The protein operates within carbohydrate degradation; pentose phosphate pathway; D-ribose 5-phosphate from D-ribulose 5-phosphate (non-oxidative stage): step 1/1. Functionally, catalyzes the reversible conversion of ribose-5-phosphate to ribulose 5-phosphate. This is Ribose-5-phosphate isomerase A from Streptococcus pneumoniae (strain Hungary19A-6).